The chain runs to 230 residues: Triosephosphate isomerase (230 aa).

9-11 (NYK) serves as a coordination point for substrate. Histidine 93 acts as the Electrophile in catalysis. Glutamate 141 serves as the catalytic Proton acceptor. Substrate is bound by residues isoleucine 146, glycine 180, and 201-202 (AS).

It belongs to the triosephosphate isomerase family. Homotetramer; dimer of dimers.

It localises to the cytoplasm. The catalysed reaction is D-glyceraldehyde 3-phosphate = dihydroxyacetone phosphate. It participates in carbohydrate biosynthesis; gluconeogenesis. Its pathway is carbohydrate degradation; glycolysis; D-glyceraldehyde 3-phosphate from glycerone phosphate: step 1/1. Involved in the gluconeogenesis. Catalyzes stereospecifically the conversion of dihydroxyacetone phosphate (DHAP) to D-glyceraldehyde-3-phosphate (G3P). This is Triosephosphate isomerase from Sulfolobus acidocaldarius (strain ATCC 33909 / DSM 639 / JCM 8929 / NBRC 15157 / NCIMB 11770).